Consider the following 130-residue polypeptide: S-protein homolog 30 (130 aa).

N-linked (GlcNAc...) asparagine glycosylation is found at N64 and N77.

The protein belongs to the plant self-incompatibility (S1) protein family.

The protein localises to the secreted. This chain is S-protein homolog 30, found in Arabidopsis thaliana (Mouse-ear cress).